A 312-amino-acid chain; its full sequence is Acetylglutamate kinase (312 aa).

Substrate-binding positions include 74–75 (GG), Arg96, and Asn195.

This sequence belongs to the acetylglutamate kinase family. ArgB subfamily.

Its subcellular location is the cytoplasm. It catalyses the reaction N-acetyl-L-glutamate + ATP = N-acetyl-L-glutamyl 5-phosphate + ADP. Its pathway is amino-acid biosynthesis; L-arginine biosynthesis; N(2)-acetyl-L-ornithine from L-glutamate: step 2/4. Catalyzes the ATP-dependent phosphorylation of N-acetyl-L-glutamate. In Nocardioides sp. (strain ATCC BAA-499 / JS614), this protein is Acetylglutamate kinase.